We begin with the raw amino-acid sequence, 615 residues long: MPKLRSATTTQGRNMAGARALWRATGMKDGDFGKPIIAVSNSFTQFVPGHVHLKDMGQLVARSIEAAGGVAKEFNTIAVDDGIAMGHSGMLYSLPSREIIADSVEYMVNAHCADAIVCISNCDKITPGMLMASMRLNIPVIFVSGGPMEAGKTKLSDQIIKLDLVDAMVAGVDNNVNDEQSGEIERSACPTCGSCSGMFTANSMNCLTEALGLSLPGNGSMLATHADREGLFKQAGTQIVELCRRYYQQDDESVLPRNIANFKAFENAMSLDIAMGGSTNTILHLLAAAVEGEVPFTLDDIDRLSRNVPHLCKVAPSTPQYHMEDVHRAGGVLGILAELNRAGLLHEDTPHVLGKSIGEVISEWDITQPENAHALEFFRAGPAGIRTTKAFSQDCRYPTADTDRENGCIRSRANAFSEEGGLAVLFGNIAQDGCIVKTAGVDESIHVFTGRARIYESQDDAVKAILADEVIAGDIVVIRYEGPKGGPGMQEMLYPTTYLKAKGLGKKCALITDGRFSGGTSGLSIGHCSPEAASGGGIGLVEEGDSMTIDIPQRKIGVDISDEVLQARREKMEQSANPWKPVSRERKVSLALKAYALLATSADKGAVRDASKLED.

Asp-81 serves as a coordination point for Mg(2+). [2Fe-2S] cluster is bound at residue Cys-122. Mg(2+) is bound by residues Asp-123 and Lys-124. An N6-carboxylysine modification is found at Lys-124. Cys-195 is a binding site for [2Fe-2S] cluster. Glu-491 contributes to the Mg(2+) binding site. Ser-517 (proton acceptor) is an active-site residue.

The protein belongs to the IlvD/Edd family. Homodimer. [2Fe-2S] cluster serves as cofactor. It depends on Mg(2+) as a cofactor.

The enzyme catalyses (2R)-2,3-dihydroxy-3-methylbutanoate = 3-methyl-2-oxobutanoate + H2O. The catalysed reaction is (2R,3R)-2,3-dihydroxy-3-methylpentanoate = (S)-3-methyl-2-oxopentanoate + H2O. The protein operates within amino-acid biosynthesis; L-isoleucine biosynthesis; L-isoleucine from 2-oxobutanoate: step 3/4. It participates in amino-acid biosynthesis; L-valine biosynthesis; L-valine from pyruvate: step 3/4. Its function is as follows. Functions in the biosynthesis of branched-chain amino acids. Catalyzes the dehydration of (2R,3R)-2,3-dihydroxy-3-methylpentanoate (2,3-dihydroxy-3-methylvalerate) into 2-oxo-3-methylpentanoate (2-oxo-3-methylvalerate) and of (2R)-2,3-dihydroxy-3-methylbutanoate (2,3-dihydroxyisovalerate) into 2-oxo-3-methylbutanoate (2-oxoisovalerate), the penultimate precursor to L-isoleucine and L-valine, respectively. In Pseudoalteromonas atlantica (strain T6c / ATCC BAA-1087), this protein is Dihydroxy-acid dehydratase.